We begin with the raw amino-acid sequence, 142 residues long: Small ribosomal subunit protein uS12 (142 aa).

The protein belongs to the universal ribosomal protein uS12 family. As to quaternary structure, part of the 30S ribosomal subunit.

Functionally, with S4 and S5 plays an important role in translational accuracy. Located at the interface of the 30S and 50S subunits. This Thermoplasma acidophilum (strain ATCC 25905 / DSM 1728 / JCM 9062 / NBRC 15155 / AMRC-C165) protein is Small ribosomal subunit protein uS12.